Here is a 472-residue protein sequence, read N- to C-terminus: MDALLTSPFIPLKKPSHNRKSNTTTASSSSSSFLQLIPQTKKETLDFDLPRYNTLISPTLDLAVVGGGPAGLAVAKRVSDAGLSVCSIDPYPNLVWPNNYGVWVDEFAAMDLLDCIDASWNSASVFIDDNNRKLLSRPYARVDRRRLKSRLLNAYLSNGVRFHQSKVLNVVHEEAKSVLLCSDGTRIPAAVVLDATGFSRCLVQYQQPYNPGYQVAYGILAEVEEHPFELDQMVFMDWRDSHLGFRPELKKRNDGLPTFLYAMPFSSDLIFLEETSLVARPGLLIEDIQERMIERLRHLGIRIKRIEEDERCVIPMGGPLPVLPQRVLGIGGTAGMVHPSTGYMVARTLAAAPIVADAIVGYIGGSGAEVSARVWKDLWPIERRRQREFFCFGMDVLLKLDLEGTRRFFDAFFGLEERYWHGFLSSRLFLPELVGFGFSLFGRASAGCRLEIMAKGTVPLIKMIRNLLKDLE.

Residues 1–25 (MDALLTSPFIPLKKPSHNRKSNTTT) constitute a chloroplast transit peptide. The tract at residues 1 to 27 (MDALLTSPFIPLKKPSHNRKSNTTTAS) is disordered. 62–90 (LAVVGGGPAGLAVAKRVSDAGLSVCSIDP) contributes to the NAD(+) binding site.

Belongs to the lycopene cyclase family. In terms of tissue distribution, expressed in flower buds and lips. Detected in roots and leaves.

Its subcellular location is the plastid. The protein resides in the chloroplast. It catalyses the reaction a carotenoid psi-end group = a carotenoid beta-end derivative. The protein operates within carotenoid biosynthesis; beta-carotene biosynthesis. Its pathway is carotenoid biosynthesis; beta-zeacarotene biosynthesis. Functionally, catalyzes the double cyclization reaction which converts lycopene to beta-carotene and neurosporene to beta-zeacarotene. In Oncidium hybrid cultivar (Orchid), this protein is Lycopene beta cyclase, chloroplastic (LCY-B).